The following is a 61-amino-acid chain: Large ribosomal subunit protein bL28 (61 aa).

Belongs to the bacterial ribosomal protein bL28 family.

The chain is Large ribosomal subunit protein bL28 from Lacticaseibacillus paracasei (strain ATCC 334 / BCRC 17002 / CCUG 31169 / CIP 107868 / KCTC 3260 / NRRL B-441) (Lactobacillus paracasei).